We begin with the raw amino-acid sequence, 162 residues long: Lipoprotein signal peptidase (162 aa).

4 helical membrane passes run 9–29 (LCLVSTIIIALDQATKALVAT), 39–59 (VIHGFFNLTHIMNPGGAFGLF), 66–86 (VRKFFFLFVSSLVALMILWLY), and 95–115 (VLSFGLAAIFAGAVGNLIDRF). Active-site residues include Asp-122 and Asp-140. Residues 136–156 (FNVADSAITIGMVVFVYHVIF) form a helical membrane-spanning segment.

Belongs to the peptidase A8 family.

It is found in the cell inner membrane. It catalyses the reaction Release of signal peptides from bacterial membrane prolipoproteins. Hydrolyzes -Xaa-Yaa-Zaa-|-(S,diacylglyceryl)Cys-, in which Xaa is hydrophobic (preferably Leu), and Yaa (Ala or Ser) and Zaa (Gly or Ala) have small, neutral side chains.. It functions in the pathway protein modification; lipoprotein biosynthesis (signal peptide cleavage). Its function is as follows. This protein specifically catalyzes the removal of signal peptides from prolipoproteins. The sequence is that of Lipoprotein signal peptidase from Desulforapulum autotrophicum (strain ATCC 43914 / DSM 3382 / VKM B-1955 / HRM2) (Desulfobacterium autotrophicum).